The chain runs to 700 residues: Receptor-type tyrosine-protein phosphatase epsilon (700 aa).

The first 19 residues, 1 to 19 (MEPLCPLLLVGFSLPLARA), serve as a signal peptide directing secretion. Topologically, residues 20 to 46 (LRGNETTADSNETTTTSGPPDPGASQP) are extracellular. N-linked (GlcNAc...) asparagine glycans are attached at residues N23 and N30. Residues 47 to 69 (LLAWLLLPLLLLLLVLLLAAYFF) traverse the membrane as a helical segment. Over 70–700 (RFRKQRKAVV…DIFSDYANFK (631 aa)) the chain is Cytoplasmic. Tyrosine-protein phosphatase domains lie at 135-394 (FREE…LLEY) and 426-689 (LEEE…VQDF). Substrate-binding positions include D303, 335-341 (CSAGVGR), and Q379. C335 functions as the Phosphocysteine intermediate in the catalytic mechanism. The active-site Phosphocysteine intermediate is the C630. At Y696 the chain carries Phosphotyrosine.

The protein belongs to the protein-tyrosine phosphatase family. Receptor class 4 subfamily. Monomer. Isoform 2: Homodimer. Can form oligomers. Dimerization is increased by oxidative stress and decreased by EGFR. Isoform 2 interacts with GRB2. A catalytically active cytoplasmic form (p65) is produced by proteolytic cleavage of either isoform 1, isoform 2 or isoform 3. In terms of processing, isoform 1 and isoform 2 are phosphorylated on tyrosine residues by tyrosine kinase Neu. Post-translationally, isoform 1 is glycosylated. Expressed in giant cell tumor (osteoclastoma rich in multinucleated osteoclastic cells).

It is found in the cell membrane. The protein resides in the cytoplasm. It carries out the reaction O-phospho-L-tyrosyl-[protein] + H2O = L-tyrosyl-[protein] + phosphate. Its function is as follows. Isoform 1 plays a critical role in signaling transduction pathways and phosphoprotein network topology in red blood cells. May play a role in osteoclast formation and function. Isoform 2 acts as a negative regulator of insulin receptor (IR) signaling in skeletal muscle. Regulates insulin-induced tyrosine phosphorylation of insulin receptor (IR) and insulin receptor substrate 1 (IRS-1), phosphorylation of protein kinase B and glycogen synthase kinase-3 and insulin induced stimulation of glucose uptake. In terms of biological role, isoform 1 and isoform 2 act as a negative regulator of FceRI-mediated signal transduction leading to cytokine production and degranulation, most likely by acting at the level of SYK to affect downstream events such as phosphorylation of SLP76 and LAT and mobilization of Ca(2+). In Homo sapiens (Human), this protein is Receptor-type tyrosine-protein phosphatase epsilon (PTPRE).